We begin with the raw amino-acid sequence, 432 residues long: Adenylosuccinate synthetase (432 aa).

GTP is bound by residues 13–19 (GDEGKGK) and 41–43 (GHT). Asp14 serves as the catalytic Proton acceptor. Asp14 and Gly41 together coordinate Mg(2+). Residues 14–17 (DEGK), 39–42 (NAGH), Thr130, Arg144, Gln225, Thr240, and Arg304 contribute to the IMP site. Catalysis depends on His42, which acts as the Proton donor. 300-306 (ATTGRSR) contacts substrate. Residues Arg306, 332-334 (KLD), and 415-417 (STG) contribute to the GTP site.

Belongs to the adenylosuccinate synthetase family. In terms of assembly, homodimer. Mg(2+) serves as cofactor.

It is found in the cytoplasm. It carries out the reaction IMP + L-aspartate + GTP = N(6)-(1,2-dicarboxyethyl)-AMP + GDP + phosphate + 2 H(+). It participates in purine metabolism; AMP biosynthesis via de novo pathway; AMP from IMP: step 1/2. In terms of biological role, plays an important role in the de novo pathway of purine nucleotide biosynthesis. Catalyzes the first committed step in the biosynthesis of AMP from IMP. The chain is Adenylosuccinate synthetase from Yersinia pestis bv. Antiqua (strain Antiqua).